Reading from the N-terminus, the 294-residue chain is NAD kinase (294 aa).

The active-site Proton acceptor is Asp-74. NAD(+) is bound by residues 74–75 (DG), 148–149 (NE), His-159, Arg-176, Asp-178, 189–194 (TAYSLS), and Gln-249.

Belongs to the NAD kinase family. A divalent metal cation serves as cofactor.

It is found in the cytoplasm. The enzyme catalyses NAD(+) + ATP = ADP + NADP(+) + H(+). Involved in the regulation of the intracellular balance of NAD and NADP, and is a key enzyme in the biosynthesis of NADP. Catalyzes specifically the phosphorylation on 2'-hydroxyl of the adenosine moiety of NAD to yield NADP. The chain is NAD kinase from Vibrio parahaemolyticus serotype O3:K6 (strain RIMD 2210633).